A 348-amino-acid polypeptide reads, in one-letter code: Phosphoribosylformylglycinamidine cyclo-ligase (348 aa).

It belongs to the AIR synthase family.

It is found in the cytoplasm. The enzyme catalyses 2-formamido-N(1)-(5-O-phospho-beta-D-ribosyl)acetamidine + ATP = 5-amino-1-(5-phospho-beta-D-ribosyl)imidazole + ADP + phosphate + H(+). It participates in purine metabolism; IMP biosynthesis via de novo pathway; 5-amino-1-(5-phospho-D-ribosyl)imidazole from N(2)-formyl-N(1)-(5-phospho-D-ribosyl)glycinamide: step 2/2. In Cereibacter sphaeroides (strain ATCC 17025 / ATH 2.4.3) (Rhodobacter sphaeroides), this protein is Phosphoribosylformylglycinamidine cyclo-ligase.